We begin with the raw amino-acid sequence, 334 residues long: Glycerol-3-phosphate dehydrogenase [NAD(P)+] (334 aa).

Tryptophan 13, arginine 33, and lysine 106 together coordinate NADPH. Lysine 106, glycine 137, and serine 139 together coordinate sn-glycerol 3-phosphate. Alanine 141 serves as a coordination point for NADPH. 5 residues coordinate sn-glycerol 3-phosphate: lysine 192, aspartate 245, serine 255, arginine 256, and asparagine 257. Catalysis depends on lysine 192, which acts as the Proton acceptor. Arginine 256 contacts NADPH. NADPH-binding residues include valine 280 and glutamate 282.

The protein belongs to the NAD-dependent glycerol-3-phosphate dehydrogenase family.

It localises to the cytoplasm. The catalysed reaction is sn-glycerol 3-phosphate + NAD(+) = dihydroxyacetone phosphate + NADH + H(+). It catalyses the reaction sn-glycerol 3-phosphate + NADP(+) = dihydroxyacetone phosphate + NADPH + H(+). Its pathway is membrane lipid metabolism; glycerophospholipid metabolism. Catalyzes the reduction of the glycolytic intermediate dihydroxyacetone phosphate (DHAP) to sn-glycerol 3-phosphate (G3P), the key precursor for phospholipid synthesis. This chain is Glycerol-3-phosphate dehydrogenase [NAD(P)+], found in Chlamydia caviae (strain ATCC VR-813 / DSM 19441 / 03DC25 / GPIC) (Chlamydophila caviae).